A 252-amino-acid polypeptide reads, in one-letter code: Two-component response regulator ORR2 (252 aa).

The Response regulatory domain occupies 7-157 (RVLVVDDSPV…DVQRLRKCSG (151 aa)). The residue at position 90 (aspartate 90) is a 4-aspartylphosphate.

Belongs to the ARR family. Type-A subfamily. In terms of processing, two-component system major event consists of a His-to-Asp phosphorelay between a sensor histidine kinase (HK) and a response regulator (RR). In plants, the His-to-Asp phosphorelay involves an additional intermediate named Histidine-containing phosphotransfer protein (HPt). This multistep phosphorelay consists of a His-Asp-His-Asp sequential transfer of a phosphate group between first a His and an Asp of the HK protein, followed by the transfer to a conserved His of the HPt protein and finally the transfer to an Asp in the receiver domain of the RR protein. In terms of tissue distribution, expressed in mature leaves and flowers, and at low levels in roots and shoots.

Functionally, functions as a response regulator involved in His-to-Asp phosphorelay signal transduction system. Phosphorylation of the Asp residue in the receiver domain activates the ability of the protein to promote the transcription of target genes. Type-A response regulators seem to act as negative regulators of the cytokinin signaling. This is Two-component response regulator ORR2 from Oryza sativa subsp. indica (Rice).